The following is a 28-amino-acid chain: Sarcolamban A (28 aa).

Residues 7–27 (LFTTFGILAILLFFLYLIYAV) traverse the membrane as a helical segment.

Interacts with SERCA. In terms of tissue distribution, strongly expressed in embryonic and larval somatic muscles and postembryonic heart.

The protein resides in the sarcoplasmic reticulum membrane. Its subcellular location is the cell membrane. It localises to the sarcolemma. It is found in the T-tubule. In terms of biological role, plays an essential role in the regulation of calcium transport at the sarcoplasmic reticulum (SR), which is secondarily required for regular muscle contraction. The polypeptide is Sarcolamban A (Drosophila melanogaster (Fruit fly)).